The primary structure comprises 180 residues: Ribosome-recycling factor (180 aa).

It belongs to the RRF family.

The protein resides in the cytoplasm. Functionally, responsible for the release of ribosomes from messenger RNA at the termination of protein biosynthesis. May increase the efficiency of translation by recycling ribosomes from one round of translation to another. The chain is Ribosome-recycling factor from Chlamydia abortus (strain DSM 27085 / S26/3) (Chlamydophila abortus).